The chain runs to 114 residues: Ribonuclease U2 (114 aa).

3 cysteine pairs are disulfide-bonded: cysteine 1-cysteine 54, cysteine 9-cysteine 113, and cysteine 55-cysteine 96. The Ca(2+) site is built by aspartate 29, valine 30, alanine 31, asparagine 32, aspartate 37, and tyrosine 39. 39–49 (YPHQYYDEASE) provides a ligand contact to substrate. Residue histidine 41 is part of the active site. The active-site Proton acceptor is glutamate 62. Arginine 85 lines the substrate pocket. The active-site Proton donor is histidine 101. 108 to 110 (DGF) serves as a coordination point for substrate.

It belongs to the ribonuclease U2 family.

The enzyme catalyses [RNA] containing adenosine + H2O = an [RNA fragment]-3'-adenosine-3'-phosphate + a 5'-hydroxy-ribonucleotide-3'-[RNA fragment].. It carries out the reaction [RNA] containing guanosine + H2O = an [RNA fragment]-3'-guanosine-3'-phosphate + a 5'-hydroxy-ribonucleotide-3'-[RNA fragment].. This is Ribonuclease U2 (RNU2) from Ustilago sphaerogena (Smut fungus).